The sequence spans 164 residues: Peptidyl-prolyl cis-trans isomerase A (164 aa).

Methionine 1 is modified (N-acetylmethionine). Valine 2 carries the N-acetylvaline; in Peptidyl-prolyl cis-trans isomerase A, N-terminally processed modification. Residues phenylalanine 7–glutamine 163 form the PPIase cyclophilin-type domain. Residue lysine 28 is modified to N6-acetyllysine; alternate. Residue lysine 28 forms a Glycyl lysine isopeptide (Lys-Gly) (interchain with G-Cter in SUMO2); alternate linkage. Lysine 28 is covalently cross-linked (Glycyl lysine isopeptide (Lys-Gly) (interchain with G-Cter in ubiquitin); alternate). 2 positions are modified to N6-acetyllysine: lysine 44 and lysine 76. A Phosphoserine modification is found at serine 77. Lysine 82 bears the N6-acetyllysine; alternate mark. A Glycyl lysine isopeptide (Lys-Gly) (interchain with G-Cter in SUMO2); alternate cross-link involves residue lysine 82. Position 93 is a phosphothreonine (threonine 93). The N-linked (GlcNAc...) asparagine glycan is linked to asparagine 108. Lysine 125 and lysine 133 each carry N6-acetyllysine.

Belongs to the cyclophilin-type PPIase family. PPIase A subfamily. In terms of assembly, interacts with protein phosphatase PPP3CA/calcineurin A. Interacts with isoform 2 of BSG/CD147. Interacts with FOXO1; the interaction promotes FOXO1 dephosphorylation, nuclear accumulation and transcriptional activity. Interacts with integrin ITGA2B:ITGB3; the interaction is ROS and peptidyl-prolyl cis-trans isomerase (PPIase) activity-dependent and is increased in the presence of thrombin. Interacts with MAP3K5. Interacts with TARDBP; the interaction is dependent on the RNA-binding activity of TARDBP and the PPIase activity of PPIA/CYPA and the acetylation of PPIA/CYPA at Lys-125 favors the interaction. Interacts with HNRNPA1, HNRNPA2B1, HNRNPC, RBMX, HNRNPK and HNRNPM. Post-translationally, acetylation at Lys-125 markedly inhibits catalysis of cis to trans isomerization. PPIA acetylation also antagonizes the immunosuppressive effects of cyclosporine by inhibiting the sequential steps of cyclosporine binding and calcineurin inhibition. Acetylation at Lys-125 favors the interaction with TARDBP.

Its subcellular location is the cytoplasm. It is found in the secreted. The protein localises to the nucleus. The enzyme catalyses [protein]-peptidylproline (omega=180) = [protein]-peptidylproline (omega=0). Its activity is regulated as follows. Binds cyclosporin A (CsA). CsA mediates some of its effects via an inhibitory action on PPIase. Catalyzes the cis-trans isomerization of proline imidic peptide bonds in oligopeptides. Exerts a strong chemotactic effect on leukocytes partly through activation of one of its membrane receptors BSG/CD147, initiating a signaling cascade that culminates in MAPK/ERK activation. Activates endothelial cells (ECs) in a proinflammatory manner by stimulating activation of NF-kappa-B and ERK, JNK and p38 MAP-kinases and by inducing expression of adhesion molecules including SELE and VCAM1. Induces apoptosis in ECs by promoting the FOXO1-dependent expression of CCL2 and BCL2L11 which are involved in EC chemotaxis and apoptosis. In response to oxidative stress, initiates proapoptotic and antiapoptotic signaling in ECs via activation of NF-kappa-B and AKT1 and up-regulation of antiapoptotic protein BCL2. Negatively regulates MAP3K5/ASK1 kinase activity, autophosphorylation and oxidative stress-induced apoptosis mediated by MAP3K5/ASK1. Necessary for the assembly of TARDBP in heterogeneous nuclear ribonucleoprotein (hnRNP) complexes and regulates TARDBP binding to RNA UG repeats and TARDBP-dependent expression of HDAC6, ATG7 and VCP which are involved in clearance of protein aggregates. Plays an important role in platelet activation and aggregation. Regulates calcium mobilization and integrin ITGA2B:ITGB3 bidirectional signaling via increased ROS production as well as by facilitating the interaction between integrin and the cell cytoskeleton. Binds heparan sulfate glycosaminoglycans. This chain is Peptidyl-prolyl cis-trans isomerase A (PPIA), found in Oryctolagus cuniculus (Rabbit).